A 200-amino-acid chain; its full sequence is Holliday junction branch migration complex subunit RuvA (200 aa).

Residues 1–64 are domain I; the sequence is MFAYFRGKLT…EDLLQLYGFS (64 aa). The interval 65 to 143 is domain II; it reads GEEERQLFRL…KLSPVSALAS (79 aa). Residues 144-154 form a flexible linker region; sequence PARLSSTLLRD. The segment at 154 to 200 is domain III; sequence DDAVNALVTLGFSRIIVQKAVVAILEQNPGLTVEEVIKAALVSIHNS.

It belongs to the RuvA family. In terms of assembly, homotetramer. Forms an RuvA(8)-RuvB(12)-Holliday junction (HJ) complex. HJ DNA is sandwiched between 2 RuvA tetramers; dsDNA enters through RuvA and exits via RuvB. An RuvB hexamer assembles on each DNA strand where it exits the tetramer. Each RuvB hexamer is contacted by two RuvA subunits (via domain III) on 2 adjacent RuvB subunits; this complex drives branch migration. In the full resolvosome a probable DNA-RuvA(4)-RuvB(12)-RuvC(2) complex forms which resolves the HJ.

The protein localises to the cytoplasm. Functionally, the RuvA-RuvB-RuvC complex processes Holliday junction (HJ) DNA during genetic recombination and DNA repair, while the RuvA-RuvB complex plays an important role in the rescue of blocked DNA replication forks via replication fork reversal (RFR). RuvA specifically binds to HJ cruciform DNA, conferring on it an open structure. The RuvB hexamer acts as an ATP-dependent pump, pulling dsDNA into and through the RuvAB complex. HJ branch migration allows RuvC to scan DNA until it finds its consensus sequence, where it cleaves and resolves the cruciform DNA. This is Holliday junction branch migration complex subunit RuvA from Pelodictyon phaeoclathratiforme (strain DSM 5477 / BU-1).